The primary structure comprises 239 residues: 4-hydroxy-tetrahydrodipicolinate reductase (239 aa).

NAD(+) is bound by residues 8 to 13, 78 to 80, and 102 to 105; these read GSTGKM, GTT, and SANM. Histidine 134 serves as the catalytic Proton donor/acceptor. Histidine 135 lines the (S)-2,3,4,5-tetrahydrodipicolinate pocket. Catalysis depends on lysine 138, which acts as the Proton donor. Residue 144–145 coordinates (S)-2,3,4,5-tetrahydrodipicolinate; that stretch reads GT.

It belongs to the DapB family.

The protein localises to the cytoplasm. The enzyme catalyses (S)-2,3,4,5-tetrahydrodipicolinate + NAD(+) + H2O = (2S,4S)-4-hydroxy-2,3,4,5-tetrahydrodipicolinate + NADH + H(+). The catalysed reaction is (S)-2,3,4,5-tetrahydrodipicolinate + NADP(+) + H2O = (2S,4S)-4-hydroxy-2,3,4,5-tetrahydrodipicolinate + NADPH + H(+). Its pathway is amino-acid biosynthesis; L-lysine biosynthesis via DAP pathway; (S)-tetrahydrodipicolinate from L-aspartate: step 4/4. In terms of biological role, catalyzes the conversion of 4-hydroxy-tetrahydrodipicolinate (HTPA) to tetrahydrodipicolinate. The sequence is that of 4-hydroxy-tetrahydrodipicolinate reductase from Rickettsia africae (strain ESF-5).